The primary structure comprises 576 residues: 60 kDa heat shock protein homolog 2, mitochondrial (576 aa).

Residues Met1 to Asn61 constitute a mitochondrion transit peptide.

Belongs to the chaperonin (HSP60) family. First detectable expression is seen in the posterior part of the dorsal tracheal trunk at stage 14-15, which marks the beginning of terminal tracheation. In the larval gut, expression in proventriculus is stronger than in midgut and hindgut. Malpighian tubules shows low expression and late third instar larval imaginal disks and brain showed moderate expression. In larval ovary and testis, expression is strong in the posterior region.

The protein resides in the mitochondrion matrix. In terms of biological role, prevents misfolding and promotes the refolding and proper assembly of unfolded polypeptides generated under stress conditions. Essential for proper development of trachea, spermatogonia and spermatocytes. The chain is 60 kDa heat shock protein homolog 2, mitochondrial (Hsp60C) from Drosophila melanogaster (Fruit fly).